Reading from the N-terminus, the 199-residue chain is Putative AgrB-like protein (199 aa).

Transmembrane regions (helical) follow at residues 43-63 (IIIF…FSFI), 81-101 (YGCL…TRLF), 108-128 (FYIV…PCPN), 139-159 (LKIL…LSPL), and 165-185 (ILIS…KGVI).

This sequence belongs to the AgrB family.

It is found in the cell membrane. In terms of biological role, may be involved in the proteolytic processing of a quorum sensing system signal molecule precursor. The chain is Putative AgrB-like protein (cfg02) from Clostridium beijerinckii (Clostridium MP).